Reading from the N-terminus, the 229-residue chain is Putative N-acetylmannosamine-6-phosphate 2-epimerase (229 aa).

The protein belongs to the NanE family.

It carries out the reaction an N-acyl-D-glucosamine 6-phosphate = an N-acyl-D-mannosamine 6-phosphate. Its pathway is amino-sugar metabolism; N-acetylneuraminate degradation; D-fructose 6-phosphate from N-acetylneuraminate: step 3/5. Its function is as follows. Converts N-acetylmannosamine-6-phosphate (ManNAc-6-P) to N-acetylglucosamine-6-phosphate (GlcNAc-6-P). The chain is Putative N-acetylmannosamine-6-phosphate 2-epimerase from Escherichia coli O157:H7.